A 753-amino-acid chain; its full sequence is A-kinase anchor protein 200 (753 aa).

Disordered stretches follow at residues 1–345 (MGKA…QIEA), 462–482 (VETR…PSRV), 531–604 (TEQE…IDPA), 620–641 (VEKE…SDEQ), and 658–684 (VEET…DKEN). Residue G2 is the site of N-myristoyl glycine attachment. Composition is skewed to basic and acidic residues over residues 8–38 (RSID…DQKT) and 59–77 (AVEK…DLTT). Low complexity predominate over residues 81–93 (AAVAEGGDAVAET). The F-actin binding stretch occupies residues 119 to 148 (KSKSKKDKVKKKWSFRSISFGKKDKQKPAK). Basic residues predominate over residues 120 to 132 (SKSKKDKVKKKWS). A phosphoserine mark is found at S132, S135, and S137. The span at 139 to 151 (GKKDKQKPAKSEE) shows a compositional bias: basic and acidic residues. The segment covering 152 to 181 (ATSPTSGTTSPTTAEAEAAPAGDAAVAEPS) has biased composition (low complexity). Positions 216-227 (EQEKQANGETEK) are enriched in basic and acidic residues. Positions 246-262 (EPATVTATESNTTATEE) are enriched in low complexity. The segment at 345-725 (ASSEVIETVT…AEQEGESNNK (381 aa)) is interaction with PKA-R2. Positions 468-480 (SPPPPLPKSPPPS) are enriched in pro residues. The span at 532–544 (EQEKQQEEAKVDS) shows a compositional bias: basic and acidic residues. Over residues 545-561 (VPETIEESSSTVVVEEV) the composition is skewed to low complexity. The span at 578 to 594 (DVQKPIEDQDTPDEKES) shows a compositional bias: basic and acidic residues. Residues 626–638 (SISSNVAESSSVS) are compositionally biased toward low complexity. A compositionally biased stretch (basic and acidic residues) spans 674–684 (EEAHSDNDKEN).

As to quaternary structure, homodimer. Interacts with Cam; interaction is calcium-dependent and is inhibited by PKC-mediated phosphorylation of Akap200. Interacts with N/Notch; the interaction stabilizes N/Notch protein levels by preventing Cbl-mediated ubiquitination and subsequent lysosomal degradation of N/Notch. Interacts with Pka-R2. Binds to F-actin; interaction is independent of myristoylation, but is inhibited by Akap200 phosphorylation and Cam binding. Isoform B: Does not bind to Pka-R2. Myristoylated; myristoylation promotes accumulation at the cell periphery. Post-translationally, phosphorylated; phosphorylation prevents binding to F-actin and Cam. In terms of tissue distribution, detected in the brain in both neurons and glia (including perineurial glia); specifically in the neuronal nuclei in the cortex and synaptic neuropil (at protein level). Detected in germline cells, somatic follicle cells and outer rim of the ring canals during oogenesis (at protein level). Isoform A: Detected in the adult (at protein level). Isoform B: Detected in the adult with higher levels in the head (at protein level).

The protein localises to the cytoplasm. It localises to the cytosol. Its subcellular location is the cell membrane. It is found in the cytoskeleton. In terms of biological role, scaffolding protein involved in the regulation of PKA signaling and anchoring to the actin cytoskeleton integrating signals propagated by cAMP, diacylglycerol and calcium. Contributes to the maintenance and regulation of cytoskeletal structures in germline via PKA-mediated signaling. As part of ethanol response in the glia, mediates ethanol-induced structural remodeling of actin cytoskeleton and perineurial membrane topology by anchoring PKA to the membrane of perineurial glia. In specific tissues such as eye and thorax, promotes N/Notch protein stability by inhibiting Cbl-mediated ubiquitination and lysosomal degradation pathway of N/Notch in a PKA-independent way. In the circadian brain neurons evening cells (E-cells), might have a role in circadian pacemaker synchronization by playing a redundant role in signaling downstream of the G protein-couple receptor Pdfr. This Drosophila melanogaster (Fruit fly) protein is A-kinase anchor protein 200.